The chain runs to 125 residues: Phosphoribosyl-AMP cyclohydrolase (125 aa).

Residue Asp74 coordinates Mg(2+). Cys75 provides a ligand contact to Zn(2+). Residues Asp76 and Asp78 each contribute to the Mg(2+) site. Zn(2+) is bound by residues Cys92 and Cys99.

It belongs to the PRA-CH family. In terms of assembly, homodimer. The cofactor is Mg(2+). It depends on Zn(2+) as a cofactor.

The protein localises to the cytoplasm. The enzyme catalyses 1-(5-phospho-beta-D-ribosyl)-5'-AMP + H2O = 1-(5-phospho-beta-D-ribosyl)-5-[(5-phospho-beta-D-ribosylamino)methylideneamino]imidazole-4-carboxamide. Its pathway is amino-acid biosynthesis; L-histidine biosynthesis; L-histidine from 5-phospho-alpha-D-ribose 1-diphosphate: step 3/9. In terms of biological role, catalyzes the hydrolysis of the adenine ring of phosphoribosyl-AMP. The polypeptide is Phosphoribosyl-AMP cyclohydrolase (Desulforapulum autotrophicum (strain ATCC 43914 / DSM 3382 / VKM B-1955 / HRM2) (Desulfobacterium autotrophicum)).